Consider the following 321-residue polypeptide: Anthranilate phosphoribosyltransferase (321 aa).

Residues Gly72, 75–76, Thr80, 82–85, 99–107, and Ser111 contribute to the 5-phospho-alpha-D-ribose 1-diphosphate site; these read GD, NVST, and KHGNVSITS. An anthranilate-binding site is contributed by Gly72. Residue Ser84 participates in Mg(2+) binding. Position 102 (Asn102) interacts with anthranilate. Arg157 contributes to the anthranilate binding site. 2 residues coordinate Mg(2+): Asp216 and Glu217.

This sequence belongs to the anthranilate phosphoribosyltransferase family. In terms of assembly, homodimer. Mg(2+) serves as cofactor.

The enzyme catalyses N-(5-phospho-beta-D-ribosyl)anthranilate + diphosphate = 5-phospho-alpha-D-ribose 1-diphosphate + anthranilate. It functions in the pathway amino-acid biosynthesis; L-tryptophan biosynthesis; L-tryptophan from chorismate: step 2/5. Its function is as follows. Catalyzes the transfer of the phosphoribosyl group of 5-phosphorylribose-1-pyrophosphate (PRPP) to anthranilate to yield N-(5'-phosphoribosyl)-anthranilate (PRA). The protein is Anthranilate phosphoribosyltransferase of Methanococcus maripaludis (strain C5 / ATCC BAA-1333).